The following is a 446-amino-acid chain: NAD(P)H sulfur oxidoreductase (CoA-dependent) (446 aa).

17-18 lines the FAD pocket; the sequence is AA. Position 28 (Arg28) interacts with CoA. Residues 39–40 and 46–48 contribute to the FAD site; these read EA and HAP. CoA contacts are provided by residues 45–49, 66–67, and Arg76; these read SHAPC and HY. Catalysis depends on Cys49, which acts as the Redox-active. The FAD site is built by Val86, Asp284, and Ala302. Positions 306 and 362 each coordinate CoA. Tyr426 provides a ligand contact to FAD. CoA is bound by residues Trp434 and Arg442.

Belongs to the class-III pyridine nucleotide-disulfide oxidoreductase family. Requires FAD as cofactor.

It catalyses the reaction hydrogen sulfide + NADP(+) = sulfur + NADPH. The catalysed reaction is hydrogen sulfide + NAD(+) = sulfur + NADH. Its function is as follows. Catalyzes the CoA-dependent reduction of elemental sulfur (S(0)) to produce hydrogen sulfide. The sequence is that of NAD(P)H sulfur oxidoreductase (CoA-dependent) from Pyrococcus abyssi (strain GE5 / Orsay).